We begin with the raw amino-acid sequence, 86 residues long: Cell division topological specificity factor (86 aa).

The protein belongs to the MinE family.

Functionally, prevents the cell division inhibition by proteins MinC and MinD at internal division sites while permitting inhibition at polar sites. This ensures cell division at the proper site by restricting the formation of a division septum at the midpoint of the long axis of the cell. This Azoarcus sp. (strain BH72) protein is Cell division topological specificity factor.